The sequence spans 504 residues: Trifunctional (S)-stylopine synthase/(S)-nandinine synthase/(S)-canadine synthase (504 aa).

A helical membrane pass occupies residues 16-36 (SSTTTTTTILLSLLFTIFIIL). Position 448 (cysteine 448) interacts with heme.

Belongs to the cytochrome P450 family. It depends on heme as a cofactor. In terms of tissue distribution, expressed in roots and at lower levels in stems, leaves and plantlets.

It localises to the endoplasmic reticulum membrane. The catalysed reaction is (S)-cheilanthifoline + reduced [NADPH--hemoprotein reductase] + O2 = (S)-stylopine + oxidized [NADPH--hemoprotein reductase] + 2 H2O + H(+). It carries out the reaction (S)-tetrahydrocolumbamine + reduced [NADPH--hemoprotein reductase] + O2 = (S)-canadine + oxidized [NADPH--hemoprotein reductase] + 2 H2O + H(+). It catalyses the reaction (S)-scoulerine + reduced [NADPH--hemoprotein reductase] + O2 = (S)-nandinine + oxidized [NADPH--hemoprotein reductase] + 2 H2O + H(+). In terms of biological role, methylenedioxy bridge-forming cytochrome P450 involved in the biosynthesis of isoquinoline alkaloids. Converts (S)-cheilanthifoline to (S)-stylopine, (S)-scoulerine to (S)-nandinine and (S)-tetrahydrocolumbamine to (S)-canadine. Can be involved in both sanguinarine and berberine biosynthesis. Catalyzes an oxidative reaction that does not incorporate oxygen into the product. This chain is Trifunctional (S)-stylopine synthase/(S)-nandinine synthase/(S)-canadine synthase, found in Argemone mexicana (Mexican prickly poppy).